The sequence spans 212 residues: UPF0502 protein ECA2523 (212 aa).

It belongs to the UPF0502 family.

This Pectobacterium atrosepticum (strain SCRI 1043 / ATCC BAA-672) (Erwinia carotovora subsp. atroseptica) protein is UPF0502 protein ECA2523.